The following is a 193-amino-acid chain: Protein Syd (193 aa).

This sequence belongs to the Syd family.

The protein resides in the cell inner membrane. Its function is as follows. Interacts with the SecY protein in vivo. May bind preferentially to an uncomplexed state of SecY, thus functioning either as a chelating agent for excess SecY in the cell or as a regulatory factor that negatively controls the translocase function. The protein is Protein Syd of Tolumonas auensis (strain DSM 9187 / NBRC 110442 / TA 4).